The primary structure comprises 144 residues: Large ribosomal subunit protein uL11 (144 aa).

The protein belongs to the universal ribosomal protein uL11 family. As to quaternary structure, part of the ribosomal stalk of the 50S ribosomal subunit. Interacts with L10 and the large rRNA to form the base of the stalk. L10 forms an elongated spine to which L12 dimers bind in a sequential fashion forming a multimeric L10(L12)X complex. In terms of processing, one or more lysine residues are methylated.

Functionally, forms part of the ribosomal stalk which helps the ribosome interact with GTP-bound translation factors. This is Large ribosomal subunit protein uL11 from Granulibacter bethesdensis (strain ATCC BAA-1260 / CGDNIH1).